The following is a 373-amino-acid chain: D-amino-acid transaminase, chloroplastic (373 aa).

The N-terminal 57 residues, M1 to L57, are a transit peptide targeting the chloroplast. R128 provides a ligand contact to pyridoxal 5'-phosphate. K222 serves as the catalytic Proton acceptor. An N6-(pyridoxal phosphate)lysine modification is found at K222. A pyridoxal 5'-phosphate-binding site is contributed by E255.

It belongs to the class-IV pyridoxal-phosphate-dependent aminotransferase family. As to quaternary structure, homodimer. Requires pyridoxal 5'-phosphate as cofactor.

The protein localises to the plastid. It localises to the chloroplast. The enzyme catalyses D-alanine + 2-oxoglutarate = D-glutamate + pyruvate. It carries out the reaction 4-amino-4-deoxychorismate = 4-aminobenzoate + pyruvate + H(+). Its pathway is cofactor biosynthesis; tetrahydrofolate biosynthesis; 4-aminobenzoate from chorismate: step 2/2. With respect to regulation, inhibited by hydroxylamine or amino-oxyacetic acid. Functionally, amino acid aminotransferase showing activity for D-Asp and D-Ala as amino donors with 2-oxoglutarate as an amino acceptor. Can also use D-Met, D-Tyr, D-Phe, D-Gln, D-Trp and D-Asn as substrates, but no activity with L-Asp, L-Ala, L-Leu, L-Ile or L-Val. Also catalyzes the reverse reaction where an amino group is transferred from D-Glu to pyruvate or oxaloacetate to produce D-Ala or D-Asp, respectively. Also involved in folate biosynthesis, acting as an aminodeoxychorismate lyase converting 4-amino-4-deoxychorismate (ADC) to p-aminobenzoate (PABA). This Arabidopsis thaliana (Mouse-ear cress) protein is D-amino-acid transaminase, chloroplastic.